The sequence spans 238 residues: ATP synthase subunit a (238 aa).

A run of 5 helical transmembrane segments spans residues 15–35, 76–96, 111–131, 167–187, and 208–230; these read IFNLTMLAMTLLIVGVIFVFI, YSLFFLCLFLFMVIANNLGLM, PTANLQYDLTLSFLVILLTHI, LALRIFGNIFAGEVMTSLLLL, and AFSVFISCIQAYVFTLLTSVYLG.

This sequence belongs to the ATPase A chain family. In terms of assembly, F-type ATPases have 2 components, CF(1) - the catalytic core - and CF(0) - the membrane proton channel. CF(1) has five subunits: alpha(3), beta(3), gamma(1), delta(1), epsilon(1). CF(0) has three main subunits: a(1), b(2) and c(9-12). The alpha and beta chains form an alternating ring which encloses part of the gamma chain. CF(1) is attached to CF(0) by a central stalk formed by the gamma and epsilon chains, while a peripheral stalk is formed by the delta and b chains.

It is found in the cell membrane. Key component of the proton channel; it plays a direct role in the translocation of protons across the membrane. In Streptococcus pneumoniae (strain ATCC BAA-255 / R6), this protein is ATP synthase subunit a.